We begin with the raw amino-acid sequence, 188 residues long: Kappa-casein (188 aa).

Positions 1–21 (MMKSSFLIVPILALTLPFLGA) are cleaved as a signal peptide. 2 O-linked (GalNAc...) threonine glycosylation sites follow: threonine 143 and threonine 148. A Phosphothreonine modification is found at threonine 163. Serine 167 bears the Phosphoserine; alternate mark. A glycan (O-linked (GalNAc...) serine; alternate) is linked at serine 167. Threonine 184 is a glycosylation site (O-linked (GalNAc...) threonine). A Phosphoserine modification is found at serine 185.

Belongs to the kappa-casein family. Mammary gland specific. Secreted in milk.

It is found in the secreted. Functionally, kappa-casein stabilizes micelle formation, preventing casein precipitation in milk. The protein is Kappa-casein (CSN3) of Sus scrofa (Pig).